The primary structure comprises 178 residues: Interleukin-10 (178 aa).

The signal sequence occupies residues 1-18 (MPNPVLLYCLVLLAGMGT). Intrachain disulfides connect Cys-30-Cys-126 and Cys-80-Cys-132. Residue Asn-134 is glycosylated (N-linked (GlcNAc...) asparagine).

It belongs to the IL-10 family. In terms of assembly, homodimer. Interacts with IL10RA and IL10RB.

The protein resides in the secreted. Its function is as follows. Major immune regulatory cytokine that acts on many cells of the immune system where it has profound anti-inflammatory functions, limiting excessive tissue disruption caused by inflammation. Mechanistically, IL10 binds to its heterotetrameric receptor comprising IL10RA and IL10RB leading to JAK1 and STAT2-mediated phosphorylation of STAT3. In turn, STAT3 translocates to the nucleus where it drives expression of anti-inflammatory mediators. Targets antigen-presenting cells (APCs) such as macrophages and monocytes and inhibits their release of pro-inflammatory cytokines including granulocyte-macrophage colony-stimulating factor /GM-CSF, granulocyte colony-stimulating factor/G-CSF, IL-1 alpha, IL-1 beta, IL-6, IL-8 and TNF-alpha. Also interferes with antigen presentation by reducing the expression of MHC-class II and co-stimulatory molecules, thereby inhibiting their ability to induce T cell activation. In addition, controls the inflammatory response of macrophages by reprogramming essential metabolic pathways including mTOR signaling. The polypeptide is Interleukin-10 (IL10) (Marmota monax (Woodchuck)).